Consider the following 87-residue polypeptide: X protein (87 aa).

Residues 5–16 are nuclear export signal; sequence LRLTLLELVRRL. Residues 18-87 form a disordered region; the sequence is GNATIESGRL…PANRKGAAVE (70 aa). Positions 36 to 48 are enriched in low complexity; sequence DTTTGTTGVTKTT.

As to quaternary structure, interacts with P and N proteins. These interactions presumably promote nuclear targeting of the X protein in infected cells. Interacts with host MAVS; this interaction inhibits MAVS-induced apoptosis. Phosphorylated.

The protein resides in the host nucleus. It is found in the host mitochondrion. Functionally, plays an essential role in the inhibition of host apoptosis. Mediates host mitochondria-mediated apoptosis through interaction with the mitochondrial antiviral signaling protein/MAVS and thereby promotes viral persistence in host central nervous system. Within the host nucleus, regulates viral RNA synthesis and polymerase complex assembly. The protein is X protein (P/X) of Borna disease virus 1 (BoDV-1).